The following is a 398-amino-acid chain: DNA replication and repair protein RecF (398 aa).

30 to 37 (GRNGFGKT) is an ATP binding site.

It belongs to the RecF family.

It is found in the cytoplasm. In terms of biological role, the RecF protein is involved in DNA metabolism; it is required for DNA replication and normal SOS inducibility. RecF binds preferentially to single-stranded, linear DNA. It also seems to bind ATP. This chain is DNA replication and repair protein RecF, found in Corynebacterium efficiens (strain DSM 44549 / YS-314 / AJ 12310 / JCM 11189 / NBRC 100395).